The sequence spans 260 residues: Hydroxyacylglutathione hydrolase (260 aa).

Residues histidine 61, histidine 63, aspartate 65, histidine 66, histidine 119, aspartate 138, and histidine 176 each coordinate Zn(2+).

This sequence belongs to the metallo-beta-lactamase superfamily. Glyoxalase II family. In terms of assembly, monomer. Requires Zn(2+) as cofactor.

It catalyses the reaction an S-(2-hydroxyacyl)glutathione + H2O = a 2-hydroxy carboxylate + glutathione + H(+). It participates in secondary metabolite metabolism; methylglyoxal degradation; (R)-lactate from methylglyoxal: step 2/2. In terms of biological role, thiolesterase that catalyzes the hydrolysis of S-D-lactoyl-glutathione to form glutathione and D-lactic acid. This is Hydroxyacylglutathione hydrolase from Brucella suis (strain ATCC 23445 / NCTC 10510).